Reading from the N-terminus, the 521-residue chain is MAP kinase-activated protein kinase mak-1 (521 aa).

Over residues 1–12 (MMFEYEEDEDPM) the composition is skewed to acidic residues. The interval 1–36 (MMFEYEEDEDPMEQQKHEEFKHHSTDHSGSPQENPF) is disordered. Residues 13 to 26 (EQQKHEEFKHHSTD) show a composition bias toward basic and acidic residues. Residues 144 to 405 (TISAEIIGIG…IHELMATPLV (262 aa)) enclose the Protein kinase domain. Residues 150 to 158 (IGIGESGKV) and lysine 173 contribute to the ATP site. The active-site Proton acceptor is aspartate 266.

It belongs to the protein kinase superfamily. CAMK Ser/Thr protein kinase family. In terms of assembly, may interact (via protein kinase domain) with unc-22 (via protein kinase and CRD domains). Mg(2+) is required as a cofactor. Autophosphorylated in vitro. Expressed in body wall muscles (at protein level). Expressed in intestine.

The protein resides in the cytoplasm. Its subcellular location is the myofibril. The protein localises to the sarcomere. It localises to the a band. The enzyme catalyses L-seryl-[protein] + ATP = O-phospho-L-seryl-[protein] + ADP + H(+). It carries out the reaction L-threonyl-[protein] + ATP = O-phospho-L-threonyl-[protein] + ADP + H(+). Its function is as follows. Serine/threonine-protein kinase which may play a role in body wall muscle contraction. May phosphorylate unc-22/twitchin. In Caenorhabditis elegans, this protein is MAP kinase-activated protein kinase mak-1.